Reading from the N-terminus, the 233-residue chain is Small ribosomal subunit protein uS2 (233 aa).

It belongs to the universal ribosomal protein uS2 family.

The protein is Small ribosomal subunit protein uS2 of Clostridium botulinum (strain Hall / ATCC 3502 / NCTC 13319 / Type A).